The sequence spans 185 residues: Bcl-2-modifying factor (185 aa).

The disordered stretch occupies residues M1–S28. Residues E8–E21 are compositionally biased toward acidic residues. The interval D67 to P75 is interaction with DLC2. The short motif at I134–L148 is the BH3 element.

This sequence belongs to the Bcl-2 family. As to quaternary structure, interacts with MCL1, BCL2, BCL2L1/BCL-Xl, BCL2A1 and BCL2L2/BCL-w. Interacts with the myosin V actin motor complex through its binding to DLC2.

May play a role in apoptosis. The sequence is that of Bcl-2-modifying factor (Bmf) from Rattus norvegicus (Rat).